The following is a 120-amino-acid chain: Immunogenic miracidial antigen 5D (120 aa).

Positions 41–120 are disordered; sequence HIDVGDEDYH…PKKYGSGYKH (80 aa). The segment covering 45–66 has biased composition (acidic residues); sequence GDEDYHDGDDDVDYTDDVDDVD.

The protein belongs to the immunogenic miracidial antigen family.

The polypeptide is Immunogenic miracidial antigen 5D (5D) (Schistosoma japonicum (Blood fluke)).